We begin with the raw amino-acid sequence, 601 residues long: Adenine deaminase (601 aa).

This sequence belongs to the metallo-dependent hydrolases superfamily. Adenine deaminase family. Requires Mn(2+) as cofactor.

It carries out the reaction adenine + H2O + H(+) = hypoxanthine + NH4(+). The chain is Adenine deaminase from Ruegeria sp. (strain TM1040) (Silicibacter sp.).